Consider the following 64-residue polypeptide: Small ribosomal subunit protein bS21 (64 aa).

The interval 37-64 (EKPSVKRKRKEKEAQRRLRKKMRMMKKA) is disordered. Residues 53–64 (RLRKKMRMMKKA) are compositionally biased toward basic residues.

The protein belongs to the bacterial ribosomal protein bS21 family.

The chain is Small ribosomal subunit protein bS21 from Syntrophotalea carbinolica (strain DSM 2380 / NBRC 103641 / GraBd1) (Pelobacter carbinolicus).